Here is a 439-residue protein sequence, read N- to C-terminus: Xylose isomerase (439 aa).

Active-site residues include His101 and Asp104. Mg(2+)-binding residues include Glu232, Glu268, His271, Asp296, Asp307, Asp309, and Asp339.

Belongs to the xylose isomerase family. In terms of assembly, homotetramer. The cofactor is Mg(2+).

The protein resides in the cytoplasm. It catalyses the reaction alpha-D-xylose = alpha-D-xylulofuranose. This Pseudoalteromonas atlantica (strain T6c / ATCC BAA-1087) protein is Xylose isomerase.